A 349-amino-acid chain; its full sequence is Lipoyl synthase (349 aa).

Positions 55, 60, 66, 81, 85, 88, and 292 each coordinate [4Fe-4S] cluster. Positions 67-281 (WEDREATFLI…SDAAYELGIK (215 aa)) constitute a Radical SAM core domain. The disordered stretch occupies residues 321–349 (LDSTTSQEASTLLERYGASEDTPVTASRR).

This sequence belongs to the radical SAM superfamily. Lipoyl synthase family. [4Fe-4S] cluster serves as cofactor.

It localises to the cytoplasm. The enzyme catalyses [[Fe-S] cluster scaffold protein carrying a second [4Fe-4S](2+) cluster] + N(6)-octanoyl-L-lysyl-[protein] + 2 oxidized [2Fe-2S]-[ferredoxin] + 2 S-adenosyl-L-methionine + 4 H(+) = [[Fe-S] cluster scaffold protein] + N(6)-[(R)-dihydrolipoyl]-L-lysyl-[protein] + 4 Fe(3+) + 2 hydrogen sulfide + 2 5'-deoxyadenosine + 2 L-methionine + 2 reduced [2Fe-2S]-[ferredoxin]. It functions in the pathway protein modification; protein lipoylation via endogenous pathway; protein N(6)-(lipoyl)lysine from octanoyl-[acyl-carrier-protein]: step 2/2. Its function is as follows. Catalyzes the radical-mediated insertion of two sulfur atoms into the C-6 and C-8 positions of the octanoyl moiety bound to the lipoyl domains of lipoate-dependent enzymes, thereby converting the octanoylated domains into lipoylated derivatives. The polypeptide is Lipoyl synthase (Corynebacterium jeikeium (strain K411)).